A 507-amino-acid chain; its full sequence is Maturase K (507 aa).

This sequence belongs to the intron maturase 2 family. MatK subfamily.

Its subcellular location is the plastid. It localises to the chloroplast. Usually encoded in the trnK tRNA gene intron. Probably assists in splicing its own and other chloroplast group II introns. This is Maturase K from Lyonia ligustrina (Maleberry).